A 1710-amino-acid chain; its full sequence is Centrosomal protein of 152 kDa (1710 aa).

3 disordered regions span residues 1 to 27 (MSLD…YERE), 39 to 79 (HDML…NEQM), and 108 to 139 (NRSK…SKCE). Residues 1–60 (MSLDFGSVALPVQNEDEEYDEEDYEREKELQQLLTDLPHDMLDDDLSSPELQYSDCSEDG) form an interaction with PLK4 region. Residues 14 to 24 (NEDEEYDEEDY) show a composition bias toward acidic residues. Basic and acidic residues predominate over residues 108–123 (NRSKTEDRHPVYHPEE). A coiled-coil region spans residues 234-490 (ENMQIIQLQV…ISLYESAAKL (257 aa)). Residues 587–604 (DEKSIEVETKTDTSEKPK) are compositionally biased toward basic and acidic residues. Residues 587–611 (DEKSIEVETKTDTSEKPKNQLWPES) form a disordered region. Coiled-coil stretches lie at residues 615–664 (DVVR…QDFD), 700–772 (EKQQ…LEKE), and 902–993 (AVSE…INEV). Residues 1120–1142 (ELSKDSASQGTGQGDPGPAAGHH) form a disordered region. Residues 1170-1241 (HCFQELEKAK…LEELQTLCKT (72 aa)) adopt a coiled-coil conformation. Phosphothreonine is present on Thr-1241.

Belongs to the CEP152 family. Interacts (via N-terminus) with PLK4; the interaction is mutally exclusive with a PLK4:CEP192 interaction. Interacts (via C-terminus) with CPAP (via-N-terminus). Interacts with CINP. Interacts with CDK5RAP2, WDR62, CEP63 and CEP131. CEP63, CDK5RAP2, CEP152, WDR62 are proposed to form a stepwise assembled complex at the centrosome forming a ring near parental centrioles. Interacts with DEUP1; this interaction recruits CEP152 to the deuterosome. The interactions with CEP63 and DEUP1 are mutually exclusive. Interacts with CCDC66.

The protein resides in the cytoplasm. It localises to the cytoskeleton. Its subcellular location is the microtubule organizing center. It is found in the centrosome. The protein localises to the centriole. Functionally, necessary for centrosome duplication; the function also seems to involve CEP63, CDK5RAP2 and WDR62 through a stepwise assembled complex at the centrosome that recruits CDK2 required for centriole duplication. Acts as a molecular scaffold facilitating the interaction of PLK4 and CPAP, 2 molecules involved in centriole formation. Proposed to snatch PLK4 away from PLK4:CEP92 complexes in early G1 daughter centriole and to reposition PLK4 at the outer boundary of a newly forming CEP152 ring structure. Also plays a key role in deuterosome-mediated centriole amplification in multiciliated that can generate more than 100 centrioles. Overexpression of CEP152 can drive amplification of centrioles. This chain is Centrosomal protein of 152 kDa, found in Homo sapiens (Human).